Reading from the N-terminus, the 755-residue chain is 1,4-alpha-glucan branching enzyme GlgB (755 aa).

Asp431 acts as the Nucleophile in catalysis. Glu484 serves as the catalytic Proton donor.

This sequence belongs to the glycosyl hydrolase 13 family. GlgB subfamily. In terms of assembly, monomer.

It carries out the reaction Transfers a segment of a (1-&gt;4)-alpha-D-glucan chain to a primary hydroxy group in a similar glucan chain.. Its pathway is glycan biosynthesis; glycogen biosynthesis. Catalyzes the formation of the alpha-1,6-glucosidic linkages in glycogen by scission of a 1,4-alpha-linked oligosaccharide from growing alpha-1,4-glucan chains and the subsequent attachment of the oligosaccharide to the alpha-1,6 position. The polypeptide is 1,4-alpha-glucan branching enzyme GlgB (Prochlorococcus marinus (strain NATL2A)).